The following is a 72-amino-acid chain: Protein SlyX homolog (72 aa).

A disordered region spans residues 53-72 (KDISPSNIRREEEETPPPHY).

The protein belongs to the SlyX family.

In Marinobacter nauticus (strain ATCC 700491 / DSM 11845 / VT8) (Marinobacter aquaeolei), this protein is Protein SlyX homolog.